The sequence spans 101 residues: Small ribosomal subunit protein uS14 (101 aa).

Belongs to the universal ribosomal protein uS14 family. In terms of assembly, part of the 30S ribosomal subunit. Contacts proteins S3 and S10.

Functionally, binds 16S rRNA, required for the assembly of 30S particles and may also be responsible for determining the conformation of the 16S rRNA at the A site. The sequence is that of Small ribosomal subunit protein uS14 from Brucella abortus (strain S19).